The sequence spans 816 residues: MAMWQGAMDNRGFQRGSFSSFQNSSSDEDLMDIPATAMDFSMRDDVPPLDREVGEDKSYNGGGIGSSNRIMDFLEEPIPGVGTYDDFNTIDWVREKSRDRDRHREITNKSKESTWALIHSVSDAFSGWLLMLLIGLLSGSLAGLIDISAHWMTDLKEGICTGGFWFNHEHCCWNSEHVTFEERDKCPEWNSWSQLIISTDEGAFAYIVNYFMYVLWALLFAFLAVSLVKVFAPYACGSGIPEIKTILSGFIIRGYLGKWTLVIKTITLVLAVSSGLSLGKEGPLVHVACCCGNILCHCFNKYRKNEAKRREVLSAAAAAGVSVAFGAPIGGVLFSLEEVSYYFPLKTLWRSFFAALVAAFTLRSINPFGNSRLVLFYVEFHTPWHLFELVPFILLGIFGGLWGALFIRTNIAWCRKRKTTQLGKYPVIEVLVVTAITAILAFPNEYTRMSTSELISELFNDCGLLDSSKLCDYENRFNTSKGGELPDRPAGVGVYSAMWQLALTLILKIVITIFTFGMKIPSGLFIPSMAVGAIAGRLLGVGMEQLAYYHQEWTVFNSWCSQGADCITPGLYAMVGAAACLGGVTRMTVSLVVIMFELTGGLEYIVPLMAAAMTSKWVADALGREGIYDAHIRLNGYPFLEAKEEFAHKTLAMDVMKPRRNDPLLTVLTQDSMTVEDVETIISETTYSGFPVVVSRESQRLVGFVLRRDLIISIENARKKQDGVVSTSIIYFTEHSPPLPPYTPPTLKLRNILDLSPFTVTDLTPMEIVVDIFRKLGLRQCLVTHNGRLLGIITKKDVLKHIAQMANQDPDSILFN.

The Cytoplasmic portion of the chain corresponds to 1 to 124; it reads MAMWQGAMDN…WALIHSVSDA (124 aa). 2 helical membrane-spanning segments follow: residues 125–162 and 208–231; these read FSGW…ICTG and VNYF…VKVF. Residues 237–241 carry the Selectivity filter part_1 motif; that stretch reads GSGIP. Serine 238 lines the chloride pocket. Positions 240 to 247 form an intramembrane region, helical; it reads IPEIKTIL. 2 helical membrane passes run 256–275 and 281–300; these read LGKW…VSSG and EGPL…HCFN. The Selectivity filter part_2 motif lies at 279–283; the sequence is GKEGP. 2 consecutive intramembrane regions (helical) follow at residues 312 to 324 and 328 to 336; these read VLSA…VSVA and PIGGVLFSL. 5 consecutive transmembrane segments (helical) span residues 348–366, 389–414, 422–442, 498–518, and 523–542; these read LWRS…RSIN, LVPF…IAWC, LGKY…ILAF, MWQL…TFGM, and GLFI…LGVG. The short motif at 523 to 527 is the Selectivity filter part_3 element; sequence GLFIP. Phenylalanine 525 serves as a coordination point for chloride. The segment at residues 570 to 584 is an intramembrane region (helical); the sequence is GLYAMVGAAACLGGV. An intramembrane region (note=Loop between two helices) is located at residues 585-587; the sequence is TRM. The segment at residues 588 to 599 is an intramembrane region (helical); the sequence is TVSLVVIMFELT. Positions 600–604 form an intramembrane region, note=Loop between two helices; the sequence is GGLEY. Residues 605–622 traverse the membrane as a helical segment; that stretch reads IVPLMAAAMTSKWVADAL. At 623–816 the chain is on the cytoplasmic side; the sequence is GREGIYDAHI…NQDPDSILFN (194 aa). Residue tyrosine 628 coordinates chloride. 2 consecutive CBS domains span residues 656–720 and 752–812; these read MKPR…ARKK and ILDL…DPDS. ATP-binding positions include threonine 666, 687-689, and 794-797; these read YSG and TKKD.

It belongs to the chloride channel (TC 2.A.49) family. ClC-5/CLCN5 subfamily. As to quaternary structure, interacts with NEDD4 and NEDD4L. Post-translationally, ubiquitinated by NEDD4L in the presence of albumin; which promotes endocytosis and proteasomal degradation.

The protein resides in the golgi apparatus membrane. Its subcellular location is the endosome membrane. The protein localises to the cell membrane. The catalysed reaction is 2 chloride(in) + H(+)(out) = 2 chloride(out) + H(+)(in). Its function is as follows. Proton-coupled chloride transporter. Functions as antiport system and exchanges chloride ions against protons. Important for normal acidification of the endosome lumen. May play an important role in renal tubular function. The CLC channel family contains both chloride channels and proton-coupled anion transporters that exchange chloride or another anion for protons. The absence of conserved gating glutamate residues is typical for family members that function as channels. The polypeptide is H(+)/Cl(-) exchange transporter 5 (CLCN5) (Pongo abelii (Sumatran orangutan)).